A 180-amino-acid polypeptide reads, in one-letter code: Large ribosomal subunit protein uL6 (180 aa).

Belongs to the universal ribosomal protein uL6 family. Part of the 50S ribosomal subunit.

Its function is as follows. This protein binds to the 23S rRNA, and is important in its secondary structure. It is located near the subunit interface in the base of the L7/L12 stalk, and near the tRNA binding site of the peptidyltransferase center. This is Large ribosomal subunit protein uL6 from Prosthecochloris aestuarii (strain DSM 271 / SK 413).